We begin with the raw amino-acid sequence, 465 residues long: NADH-quinone oxidoreductase subunit N (465 aa).

A run of 13 helical transmembrane segments spans residues 6-26 (ILPETFSIISSLVLLLLGIVF), 30-50 (TINLLALGCTVITLIILILSA), 66-86 (LYIRSAQGLILIAGILVLLLL), 98-118 (SILILFTLFGMITLVSANNLI), 156-176 (ALSSCIMLYGMSLLYGYTGLV), 194-214 (IVFGLVLILIGLCFKLAIAPF), 226-246 (PTIVTAFFSTVPKAALVTFLI), 261-281 (FQPVLLYISALSVLISAFGAL), 289-309 (LLAYSSIGHIGFILASLSIFT), 317-337 (LIYLVIYIITNIGLFSYFIQI), 363-383 (ILLFSMAGIPPLAGFFAKLFI), 391-411 (GFIGMSLIFIVASVISCYYYL), and 432-452 (SLFIVTSVASLINIVLFMCVE).

This sequence belongs to the complex I subunit 2 family. In terms of assembly, NDH-1 is composed of 14 different subunits. Subunits NuoA, H, J, K, L, M, N constitute the membrane sector of the complex.

It localises to the cell membrane. The enzyme catalyses a quinone + NADH + 5 H(+)(in) = a quinol + NAD(+) + 4 H(+)(out). NDH-1 shuttles electrons from NADH, via FMN and iron-sulfur (Fe-S) centers, to quinones in the respiratory chain. The immediate electron acceptor for the enzyme in this species is believed to be ubiquinone. Couples the redox reaction to proton translocation (for every two electrons transferred, four hydrogen ions are translocated across the cytoplasmic membrane), and thus conserves the redox energy in a proton gradient. The protein is NADH-quinone oxidoreductase subunit N of Wolbachia sp. subsp. Brugia malayi (strain TRS).